Reading from the N-terminus, the 21-residue chain is Kassinatuerin-1 (21 aa).

I21 carries the isoleucine amide modification.

As to expression, expressed by the skin dorsal glands.

It is found in the secreted. Its function is as follows. Shows broad-spectrum antimicrobial activity against the Gram-negative bacterium E.coli (MIC=6.25 uM), K.pneumoniae (MIC=25 uM), E.cloacae (MIC=6.25 uM), P.aeruginosa (MIC=25 uM), the Gram-positive bacterium S.aureus (MIC=6.25 uM), S.epidermidis (MIC=6.25 uM), E.faecalis (MIC=12.5 uM), and the fungus C.albicans (MIC=100 uM). Has no antimicrobial effect against P.mirabilis (MIC&gt;100 uM). Has relatively high cytolytic and hemolytic activities. Its alpha-helix has considerable amphipathic character. In Kassina senegalensis (Senegal running frog), this protein is Kassinatuerin-1.